We begin with the raw amino-acid sequence, 863 residues long: Disintegrin and metalloproteinase domain-containing protein 15 (863 aa).

The N-terminal stretch at 1-17 (MRLALLWALGLLGAGSP) is a signal peptide. Positions 18–206 (LPSWPLPNIG…LGQRHIRRRR (189 aa)) are excised as a propeptide. The tract at residues 22–45 (PLPNIGGTEEQQAESEKAPREPLE) is disordered. Residues 35-44 (ESEKAPREPL) show a composition bias toward basic and acidic residues. The short motif at 177–184 (HTCALSWR) is the Cysteine switch element. Cys179 serves as a coordination point for Zn(2+). Topologically, residues 207–696 (DVVTETKTVE…QLKATSSLTT (490 aa)) are extracellular. Residues 213-414 (KTVELVIVAD…GMGSCLFERL (202 aa)) enclose the Peptidase M12B domain. N-linked (GlcNAc...) asparagine glycosylation occurs at Asn237. 4 disulfides stabilise this stretch: Cys323-Cys409, Cys365-Cys393, Cys367-Cys376, and Cys480-Cys500. Zn(2+) is bound at residue His348. Glu349 is a catalytic residue. Residues His352 and His358 each coordinate Zn(2+). 2 N-linked (GlcNAc...) asparagine glycosylation sites follow: Asn389 and Asn392. The Disintegrin domain maps to 421 to 508 (AAFCGNMFVE…QCPPDVSLGD (88 aa)). Positions 484 to 486 (RGD) match the Cell attachment site motif. 2 N-linked (GlcNAc...) asparagine glycosylation sites follow: Asn606 and Asn611. 3 cysteine pairs are disulfide-bonded: Cys657/Cys667, Cys661/Cys673, and Cys675/Cys684. The 29-residue stretch at 657-685 (CRSKCHGHGVCDSNRHCYCEEGWAPPDCT) folds into the EGF-like domain. A helical transmembrane segment spans residues 697–717 (GLLLSLLVLLVLVMLGASYWY). A phosphotyrosine; by HCK and LCK mark is found at Tyr715 and Tyr735. Residues 718 to 863 (RARLHQRLCQ…PPPTVSSLYL (146 aa)) are Cytoplasmic-facing. A disordered region spans residues 736 to 863 (RAAQSGPSER…PPPTVSSLYL (128 aa)). Residues 767–778 (PAPPSRPLPPDP) show a composition bias toward pro residues. Residues 779-789 (VSKRLQAELAD) show a composition bias toward basic and acidic residues. Pro residues-rich tracts occupy residues 791–800 (PNPPTRPLPA) and 813–824 (AKPPPPRKPLPA). Short sequence motifs (SH3-binding) lie at residues 815–821 (PPPPRKP) and 850–856 (RPAPPPP).

In terms of assembly, interacts with ITAGV-ITGB3 (vitronectin receptor). Interacts with SH3GL2 and SNX9; this interaction occurs preferentially with ADAM15 precursor, rather than the processed form, suggesting it occurs in a secretory pathway compartment prior to the medial Golgi. Interacts with ITAG9-ITGB1. Interacts specifically with Src family protein-tyrosine kinases (PTKs). Interacts with SH3PXD2A. Interacts with ITAGV-ITGB1. Interacts with GRB2, HCK, ITSN1, ITSN2, LYN, MAPK1, MAPK3, NCF1, NCK1, nephrocystin, PTK6, SNX33, LCK and SRC. The cofactor is Zn(2+). The precursor is cleaved by a furin endopeptidase. In terms of processing, phosphorylation increases association with PTKs. As to expression, expressed in colon and small intestine. Expressed in airway smooth muscle and glomerular mesangial cells (at protein level). Ubiquitously expressed. Overexpressed in atherosclerotic lesions. Constitutively expressed in cultured endothelium and smooth muscle. Expressed in chondrocytes. Expressed in airway smooth muscle and glomerular mesangial cells.

The protein resides in the endomembrane system. The protein localises to the cell junction. It is found in the adherens junction. Its subcellular location is the cell projection. It localises to the cilium. The protein resides in the flagellum. The protein localises to the cytoplasmic vesicle. It is found in the secretory vesicle. Its subcellular location is the acrosome. Inhibited by hydroxamate-type metalloproteinase inhibitors such as marimastat. Inhibited by metalloproteinase inhibitor 2 (TIMP-2) and TIMP-3 at nanomolar concentrations. Not significantly inhibited by TIMP-1 at concentrations of up to 100 nM. Not activated by PMA or ionomycin. Functionally, active metalloproteinase with gelatinolytic and collagenolytic activity. Plays a role in the wound healing process. Mediates both heterotypic intraepithelial cell/T-cell interactions and homotypic T-cell aggregation. Inhibits beta-1 integrin-mediated cell adhesion and migration of airway smooth muscle cells. Suppresses cell motility on or towards fibronectin possibly by driving alpha-v/beta-1 integrin (ITAGV-ITGB1) cell surface expression via ERK1/2 inactivation. Cleaves E-cadherin in response to growth factor deprivation. Plays a role in glomerular cell migration. Plays a role in pathological neovascularization. May play a role in cartilage remodeling. May be proteolytically processed, during sperm epididymal maturation and the acrosome reaction. May play a role in sperm-egg binding through its disintegrin domain. This Homo sapiens (Human) protein is Disintegrin and metalloproteinase domain-containing protein 15 (ADAM15).